Consider the following 372-residue polypeptide: MQSVIHSAHRIVVKVGSSLVTNDGAGLDHAALERWASEIADLMRRGKEVVLVSSGAIAEGIKRLGWSAKPSAVHEKQAAAAVGQMGLCEAYERVFTAHNLKTAQVLLTHEDMADRTRYLNARTTLLTLLSLNVVPIINENDTVVTSEIKLGDNDTLGALVTNLIEADALVILTDQQGLYTADPRKHPDAEFVHEACAGNPELEAMAGGAGSSVGTGGMLTKILAAKRAARSGATTVIACGREANVLSRLADGEAIGTQLVAQNDRWAARKQWLADHLRLAGRLVLDDGAARAVTARHTSLLPIGVIAVEGEFLRGDAVACVNSDGREVARGLANYSSDEARMIMRHPTRDIERLLGYVGEPELIHRDNLVNL.

Lysine 14 provides a ligand contact to ATP. The substrate site is built by serine 54, aspartate 141, and asparagine 153. ATP contacts are provided by residues 173-174 and 215-221; these read TD and TGGMLTK. Residues 280 to 358 form the PUA domain; sequence AGRLVLDDGA…RDIERLLGYV (79 aa).

It belongs to the glutamate 5-kinase family.

The protein localises to the cytoplasm. The catalysed reaction is L-glutamate + ATP = L-glutamyl 5-phosphate + ADP. It functions in the pathway amino-acid biosynthesis; L-proline biosynthesis; L-glutamate 5-semialdehyde from L-glutamate: step 1/2. Its function is as follows. Catalyzes the transfer of a phosphate group to glutamate to form L-glutamate 5-phosphate. The sequence is that of Glutamate 5-kinase from Laribacter hongkongensis (strain HLHK9).